Consider the following 74-residue polypeptide: Toxin BmKaTx17 (74 aa).

The first 8 residues, leucine 1 to serine 8, serve as a signal peptide directing secretion. Residues arginine 10–histidine 72 enclose the LCN-type CS-alpha/beta domain. Disulfide bonds link cysteine 20–cysteine 71, cysteine 24–cysteine 44, cysteine 30–cysteine 54, and cysteine 34–cysteine 56. Positions arginine 73 to arginine 74 are cleaved as a propeptide — removed by a carboxypeptidase.

It belongs to the long (4 C-C) scorpion toxin superfamily. Sodium channel inhibitor family. Alpha subfamily. In terms of tissue distribution, expressed by the venom gland.

Its subcellular location is the secreted. Its function is as follows. Alpha toxins bind voltage-independently at site-3 of sodium channels (Nav) and inhibit the inactivation of the activated channels, thereby blocking neuronal transmission. The polypeptide is Toxin BmKaTx17 (Olivierus martensii (Manchurian scorpion)).